The following is a 1057-amino-acid chain: DNA-directed RNA polymerase subunit beta' (1057 aa).

Zn(2+) is bound by residues C60, C62, C75, and C78. D449, D451, and D453 together coordinate Mg(2+). Residues C822, C896, C903, and C906 each coordinate Zn(2+).

Belongs to the RNA polymerase beta' chain family. In terms of assembly, the RNAP catalytic core consists of 2 alpha, 1 beta, 1 beta' and 1 omega subunit. When a sigma factor is associated with the core the holoenzyme is formed, which can initiate transcription. Requires Mg(2+) as cofactor. It depends on Zn(2+) as a cofactor.

The catalysed reaction is RNA(n) + a ribonucleoside 5'-triphosphate = RNA(n+1) + diphosphate. Its function is as follows. DNA-dependent RNA polymerase catalyzes the transcription of DNA into RNA using the four ribonucleoside triphosphates as substrates. In Staphylococcus aureus, this protein is DNA-directed RNA polymerase subunit beta'.